The chain runs to 493 residues: Activin receptor type-1C (493 aa).

The N-terminal stretch at 1 to 20 is a signal peptide; that stretch reads MTRALCSALRQALLLLAAAA. Topologically, residues 22 to 113 are extracellular; sequence LSPGLKCVCL…PNAPKLGPME (92 aa). A helical membrane pass occupies residues 114-134; sequence LAIIITVPVCLLSIAAMLTVW. The Cytoplasmic segment spans residues 135 to 493; it reads ACQGRQCSYR…QLCVKEDCKA (359 aa). Residues 165–194 form the GS domain; the sequence is KTLKDLIYDVTASGSGSGLPLLVQRTIART. A Protein kinase domain is found at 195 to 485; it reads IVLQEIVGKG…LRIKKTISQL (291 aa). ATP-binding positions include 201–209 and K222; that span reads VGKGRFGEV. The active-site Proton acceptor is D323.

Belongs to the protein kinase superfamily. TKL Ser/Thr protein kinase family. TGFB receptor subfamily. Binds the type 2 receptor protein ACVR2A. The cofactor is Mg(2+). Requires Mn(2+) as cofactor. As to expression, present in pancreas, heart, colon, small intestine, ovary and the hippocampus, medulla oblongata and putamen of the brain. Isoform 1, isoform 2, isoform 3 and isoform 4 are all expressed in the placenta throughout pregnancy.

The protein localises to the membrane. The catalysed reaction is L-threonyl-[receptor-protein] + ATP = O-phospho-L-threonyl-[receptor-protein] + ADP + H(+). It catalyses the reaction L-seryl-[receptor-protein] + ATP = O-phospho-L-seryl-[receptor-protein] + ADP + H(+). Serine/threonine protein kinase which forms a receptor complex on ligand binding. The receptor complex consists of 2 type II and 2 type I transmembrane serine/threonine kinases. Type II receptors phosphorylate and activate type I receptors which autophosphorylate, then bind and activate SMAD transcriptional regulators, SMAD2 and SMAD3. Receptor for activin AB, activin B, activin E and NODAL. Upon NODAL binding, activation results in increased apoptosis and reduced proliferation through suppression of AKT signaling and the activation of Smad2-dependent signaling pathway in pancreatic beta-cells, trophoblasts, epithelial or neuronal cells. Acts as a positive regulator for macrophage activation partially through down-regulation of PPARG expression. This chain is Activin receptor type-1C, found in Homo sapiens (Human).